The following is a 516-amino-acid chain: MKILILSFFLILGINLVFCQSSISLSATIYDQSPARNPDFEIPNAPNAVVKNMVLSTLGADKTPTYCCGDNGVYYNGQFDIHSQSTFDSWFHEIEGISYAVPYELVLIESKDEPGIYVYTSSSFFPIDGKGFDNKTLYPDEITYNGHNYHFCMKIHSSFTYHGGEYFTFAGDDDVWVYFDNNLLIDLGGLHTSASETVYLDNLGLTIGQSFPFDFFYCERHTYESNLNIITNLNLTCIEYDACGVCLGKNDTCCFVNKCETINRCLEADCNEGTNFQCDYHIKNCSDGDICSTDGCDIGFGCINLPINCDDGNYCTKDYCDPTYGCLHIETANCTECLETGCITVLPCFPVTCDSLNSSHCVASAMNCSDNDPCTSTECVNGECTYEWICGSEDSSSGVVDSSSGVVDSSSDVIDSSDIIIDSSSDIPIPTLSPSPQPSRFPTDTPTNTPMPPTRPPTPTEDPKIYEDPEDLDKDCLHCKDLGCILTGKSCGYLKNEKYEKSNCKENCCSHTPTCF.

A signal peptide spans 1–19 (MKILILSFFLILGINLVFC). One can recognise a PA14 domain in the interval 109–249 (ESKDEPGIYV…YDACGVCLGK (141 aa)). Asn-134, Asn-234, Asn-250, Asn-284, Asn-333, Asn-357, and Asn-367 each carry an N-linked (GlcNAc...) asparagine glycan. A compositionally biased stretch (low complexity) spans 418-427 (DIIIDSSSDI). The disordered stretch occupies residues 418-465 (DIIIDSSSDIPIPTLSPSPQPSRFPTDTPTNTPMPPTRPPTPTEDPKI). The span at 449 to 460 (TPMPPTRPPTPT) shows a compositional bias: pro residues.

This sequence belongs to the prespore-cell-inducing factor family.

It is found in the secreted. This is Protein psiC (psiC) from Dictyostelium discoideum (Social amoeba).